The sequence spans 543 residues: Ribonuclease Y (543 aa).

Residues 4 to 24 (IIMIPVATAIVSLLVGTVIGY) form a helical membrane-spanning segment. The region spanning 233 to 296 (TVSVVDLPNE…EIAKRAMERL (64 aa)) is the KH domain. Residues 359–452 (VLSHSIEVGK…VVAADTISSA (94 aa)) enclose the HD domain.

Belongs to the RNase Y family.

The protein localises to the cell membrane. In terms of biological role, endoribonuclease that initiates mRNA decay. The chain is Ribonuclease Y from Lactobacillus helveticus (strain DPC 4571).